The sequence spans 379 residues: PqqA peptide cyclase (379 aa).

The region spanning 8–220 (LPAPIGLLAE…IRVVEEARER (213 aa)) is the Radical SAM core domain. [4Fe-4S] cluster is bound by residues Cys-22, Cys-26, and Cys-29.

The protein belongs to the radical SAM superfamily. PqqE family. In terms of assembly, interacts with PqqD. The interaction is necessary for activity of PqqE. [4Fe-4S] cluster serves as cofactor.

It carries out the reaction [PQQ precursor protein] + S-adenosyl-L-methionine = E-Y cross-linked-[PQQ precursor protein] + 5'-deoxyadenosine + L-methionine + H(+). It participates in cofactor biosynthesis; pyrroloquinoline quinone biosynthesis. In terms of biological role, catalyzes the cross-linking of a glutamate residue and a tyrosine residue in the PqqA protein as part of the biosynthesis of pyrroloquinoline quinone (PQQ). The chain is PqqA peptide cyclase from Methylobacterium nodulans (strain LMG 21967 / CNCM I-2342 / ORS 2060).